Consider the following 727-residue polypeptide: Probable glutamate carboxypeptidase ARB_02390 (727 aa).

The N-terminal stretch at 1-18 (MIVKSLSLLALAAATVEG) is a signal peptide. N-linked (GlcNAc...) asparagine glycosylation is found at N60 and N80. The 139-residue stretch at 158-296 (ATAEYVYVGR…ISQLDAQPIL (139 aa)) folds into the PA domain. R197 provides a ligand contact to substrate. N223 carries N-linked (GlcNAc...) asparagine glycosylation. Residues 255 to 279 (FPGDPTTPGYPSRPDSPRKDKSPVV) are disordered. Ca(2+)-binding residues include T261 and Y264. Residues 266-565 (SRPDSPRKDK…QFLGLLGYHL (300 aa)) form an NAALADase region. 3 N-linked (GlcNAc...) asparagine glycosylation sites follow: N310, N319, and N353. Residue H366 participates in Zn(2+) binding. The For NAALADase activity role is filled by E414. Residue E415 participates in Zn(2+) binding. E423 and E426 together coordinate Ca(2+). Residue D443 participates in Zn(2+) binding. Substrate contacts are provided by residues 516–518 (TGA) and Y530. Residue H531 participates in Zn(2+) binding. Catalysis depends on S604, which acts as the Charge relay system. N614 carries N-linked (GlcNAc...) asparagine glycosylation. H665 (charge relay system) is an active-site residue. 675–676 (GY) provides a ligand contact to substrate. A glycan (N-linked (GlcNAc...) asparagine) is linked at N692.

The protein belongs to the peptidase M28 family. M28B subfamily. Zn(2+) is required as a cofactor.

It localises to the secreted. The enzyme catalyses Release of an unsubstituted, C-terminal glutamyl residue, typically from Ac-Asp-Glu or folylpoly-gamma-glutamates.. In terms of biological role, has both folate hydrolase and N-acetylated-alpha-linked-acidic dipeptidase (NAALADase) activity. Also exhibits a dipeptidyl-peptidase IV type activity. This is Probable glutamate carboxypeptidase ARB_02390 from Arthroderma benhamiae (strain ATCC MYA-4681 / CBS 112371) (Trichophyton mentagrophytes).